The sequence spans 675 residues: Polyamine deacetylase HDAC10 (675 aa).

Aspartate 22 is a substrate binding site. The Substrate specificity motif lies at 23-26; it reads PACE. Aspartate 94 is a binding site for substrate. Catalysis depends on histidine 137, which acts as the Proton donor/acceptor. Positions 174, 176, and 267 each coordinate Zn(2+). A substrate-binding site is contributed by tyrosine 307. Positions 362-399 are disordered; it reads LAQSETNPKRPRLDATNGGPKESSEPASESNPKKTAQD.

Belongs to the histone deacetylase family. HD type 2 subfamily.

The protein localises to the cytoplasm. It localises to the nucleus. The enzyme catalyses N(8)-acetylspermidine + H2O = spermidine + acetate. It catalyses the reaction N-acetylputrescine + H2O = putrescine + acetate. The catalysed reaction is N-acetylcadaverine + H2O = cadaverine + acetate. Polyamine deacetylase (PDAC), which acts preferentially on N(8)-acetylspermidine, and also on acetylcadaverine and acetylputrescine. Exhibits attenuated catalytic activity toward N(1),N(8)-diacetylspermidine and very low activity, if any, toward N(1)-acetylspermidine. Has a very weak lysine deacetylase, if any. The sequence is that of Polyamine deacetylase HDAC10 (hdac10) from Danio rerio (Zebrafish).